A 206-amino-acid chain; its full sequence is Cell division protein SepF (206 aa).

Over residues 31 to 53 (EEKERRKTERQEQRQAVKQEKRT) the composition is skewed to basic and acidic residues. A disordered region spans residues 31–81 (EEKERRKTERQEQRQAVKQEKRTFPSQRPAFSEEAPTSSSSKLSAASGSSD). Residues 60–80 (AFSEEAPTSSSSKLSAASGSS) are compositionally biased toward low complexity.

The protein belongs to the SepF family. Homodimer. Interacts with FtsZ.

Its subcellular location is the cytoplasm. In terms of biological role, cell division protein that is part of the divisome complex and is recruited early to the Z-ring. Probably stimulates Z-ring formation, perhaps through the cross-linking of FtsZ protofilaments. Its function overlaps with FtsA. The chain is Cell division protein SepF from Lachnoclostridium phytofermentans (strain ATCC 700394 / DSM 18823 / ISDg) (Clostridium phytofermentans).